Here is a 61-residue protein sequence, read N- to C-terminus: MLNILSFIGICLNSFLYSSSFFVAKLPEAYAFLNPIVDVMPVIPLFFFLLAFVWQAAVSFR.

Positions 1 to 24 are excised as a propeptide; the sequence is MLNILSFIGICLNSFLYSSSFFVA. The helical transmembrane segment at 40–60 threads the bilayer; that stretch reads MPVIPLFFFLLAFVWQAAVSF.

It belongs to the PsbK family. In terms of assembly, PSII is composed of 1 copy each of membrane proteins PsbA, PsbB, PsbC, PsbD, PsbE, PsbF, PsbH, PsbI, PsbJ, PsbK, PsbL, PsbM, PsbT, PsbX, PsbY, PsbZ, Psb30/Ycf12, at least 3 peripheral proteins of the oxygen-evolving complex and a large number of cofactors. It forms dimeric complexes.

It localises to the plastid. It is found in the chloroplast thylakoid membrane. Its function is as follows. One of the components of the core complex of photosystem II (PSII). PSII is a light-driven water:plastoquinone oxidoreductase that uses light energy to abstract electrons from H(2)O, generating O(2) and a proton gradient subsequently used for ATP formation. It consists of a core antenna complex that captures photons, and an electron transfer chain that converts photonic excitation into a charge separation. The sequence is that of Photosystem II reaction center protein K from Cucumis sativus (Cucumber).